We begin with the raw amino-acid sequence, 251 residues long: Imidazole glycerol phosphate synthase subunit HisF (251 aa).

Catalysis depends on residues Asp12 and Asp131.

The protein belongs to the HisA/HisF family. As to quaternary structure, heterodimer of HisH and HisF.

The protein localises to the cytoplasm. It catalyses the reaction 5-[(5-phospho-1-deoxy-D-ribulos-1-ylimino)methylamino]-1-(5-phospho-beta-D-ribosyl)imidazole-4-carboxamide + L-glutamine = D-erythro-1-(imidazol-4-yl)glycerol 3-phosphate + 5-amino-1-(5-phospho-beta-D-ribosyl)imidazole-4-carboxamide + L-glutamate + H(+). The protein operates within amino-acid biosynthesis; L-histidine biosynthesis; L-histidine from 5-phospho-alpha-D-ribose 1-diphosphate: step 5/9. Its function is as follows. IGPS catalyzes the conversion of PRFAR and glutamine to IGP, AICAR and glutamate. The HisF subunit catalyzes the cyclization activity that produces IGP and AICAR from PRFAR using the ammonia provided by the HisH subunit. The protein is Imidazole glycerol phosphate synthase subunit HisF of Helicobacter hepaticus (strain ATCC 51449 / 3B1).